We begin with the raw amino-acid sequence, 638 residues long: Autolysin (638 aa).

The N-terminal stretch at 1–28 (MSLATRRFGAAAALLVAACVLCTAPAWA) is a signal peptide. The propeptide at 29-183 (QNETTGTGMV…LKSILKGSQK (155 aa)) is activation peptide. The N-linked (GlcNAc...) asparagine glycan is linked to Asn30. A Cysteine switch motif is present at residues 95–102 (PRCNVPRA). Position 97 (Cys97) interacts with Zn(2+). Asn126 is a glycosylation site (N-linked (GlcNAc...) asparagine). The tract at residues 269-292 (VTPPPRPPRPPRPPPRAGSTISSL) is disordered. Residues 270–284 (TPPPRPPRPPRPPPR) are compositionally biased toward pro residues. N-linked (GlcNAc...) asparagine glycosylation occurs at Asn296. Residue His396 participates in Zn(2+) binding. Glu397 is an active-site residue. 2 residues coordinate Zn(2+): His400 and His406. 4 N-linked (GlcNAc...) asparagine glycosylation sites follow: Asn458, Asn465, Asn470, and Asn523.

This sequence belongs to the peptidase M11 family. Zn(2+) is required as a cofactor. Present in 2 forms: an inactive V-form in vegetative cells and an active and soluble G-form. The V-form enzyme may be converted to the G-form enzyme during gametic differentiation under nitrogen-starved conditions.

Its subcellular location is the periplasm. The protein resides in the secreted. It localises to the cell wall. It catalyses the reaction Cleavage of the proline- and hydroxyproline-rich proteins of the Chlamydomonas cell wall. Also cleaves azocasein, gelatin and Leu-Trp-Met-|-Arg-Phe-Ala.. Mediates digestion of the cell walls of the 2 mating type gametes during mating as a necessary prelude to cell fusion. This enzyme acts specifically on the framework proteins (inner wall) of the cell wall, cleaving several model peptides at specific sites. In Chlamydomonas reinhardtii (Chlamydomonas smithii), this protein is Autolysin.